We begin with the raw amino-acid sequence, 308 residues long: Methionyl-tRNA formyltransferase (308 aa).

Position 109 to 112 (109 to 112) interacts with (6S)-5,6,7,8-tetrahydrofolate; it reads SLLP.

The protein belongs to the Fmt family.

It carries out the reaction L-methionyl-tRNA(fMet) + (6R)-10-formyltetrahydrofolate = N-formyl-L-methionyl-tRNA(fMet) + (6S)-5,6,7,8-tetrahydrofolate + H(+). Functionally, attaches a formyl group to the free amino group of methionyl-tRNA(fMet). The formyl group appears to play a dual role in the initiator identity of N-formylmethionyl-tRNA by promoting its recognition by IF2 and preventing the misappropriation of this tRNA by the elongation apparatus. This is Methionyl-tRNA formyltransferase from Phenylobacterium zucineum (strain HLK1).